Consider the following 1501-residue polypeptide: RE1-silencing transcription factor A (1501 aa).

A C2H2-type 1 zinc finger spans residues 158 to 180 (FRCKPCQYKAESEEEFVHHIKIH). Over residues 186-200 (VDNDSKKNPQGKEAD) the composition is skewed to basic and acidic residues. The interval 186-209 (VDNDSKKNPQGKEADSSIPEESDI) is disordered. C2H2-type zinc fingers lie at residues 214-236 (IQCD…LKHH), 246-268 (YKCT…LRNH), 274-296 (YTCS…IRTH), 302-324 (YQCI…MRTH), 330-353 (FKCE…RQVH), 359-381 (LTCP…VELH), and 387-410 (FLCP…KSRH). Disordered stretches follow at residues 491–514 (SSTQ…SRKS), 569–612 (SFVK…SVAS), 885–929 (PTKV…VPGD), and 1040–1079 (VAAG…GDEQ). Basic and acidic residues-rich tracts occupy residues 498–512 (KASE…DKSR) and 594–605 (ITEKKEKGKQLD). The segment covering 1067 to 1079 (QPTSVQPPGGDEQ) has biased composition (polar residues). Residues 1463-1485 (FVCIFCDRTFRKEEEYTKHLRRH) form a C2H2-type 9 zinc finger.

It is found in the nucleus. Its subcellular location is the cytoplasm. Transcriptional repressor which binds neuron-restrictive silencer element (NRSE) and represses neuronal gene transcription in non-neuronal cells. Plays a role in the early development of the nervous system and is required for proper patterning of the neuroectoderm during gastrulation. This involves the correct speciation of the neuroepithelial domain and adequate development of the non-neural ectoderm. The sequence is that of RE1-silencing transcription factor A (rest-a) from Xenopus laevis (African clawed frog).